Consider the following 236-residue polypeptide: Protein INCA1 (236 aa).

Residue Ser-23 is modified to Phosphoserine. The tract at residues 75–99 (GLYPPEQLPPPEMLWRRKKRRPCLE) is interaction with CCNA1 and CCNA1/CDK2 complex; essential for CDK2 inhibitory activity. Positions 90–95 (RRKKRR) match the Nuclear localization signal motif. Phosphothreonine is present on Thr-182. Phosphoserine is present on residues Ser-191 and Ser-194.

This sequence belongs to the INCA family. In terms of assembly, interacts with CCNA1. Interacts with CCNA2, CCNB1 and CCNE1. Found in a complex with CCNA1 and CDK2. Interacts with ZNF16; the interaction inhibits INCA1 activity and induces the cell cycle process. Interacts with SPACA9. Interacts with the CCNA1/CDK2 complex. Interacts with ING5, DAZAP2, RNF26, USP15, SPOUT1, DPH7, TRIM26 and RAB5C. Phosphorylated when part of a complex with CCNA1 and CDK2. Strongly phosphorylated by CDK2 on its C-terminal region spanning amino acid 149-221. Less intensively phosphorylated by CDK2 on its first 75 amino acid residues. In terms of tissue distribution, detected in testis, and at lower levels in ovary. Detected at very low levels in testis tumors. Down-regulated in bone marrow cells in acute myeloid and lymphoid leukemia patients as compared with normal bone marrow cells.

The protein localises to the nucleus. The protein resides in the cytoplasm. Its function is as follows. Binds to CDK2-bound cyclins and inhibits the kinase activity of CDK2; binding to cyclins is critical for its function as CDK inhibitor. Inhibits cell growth and cell proliferation and may play a role in cell cycle control. Required for ING5-mediated regulation of S-phase progression, enhancement of Fas-induced apoptosis and inhibition of cell growth. This Homo sapiens (Human) protein is Protein INCA1 (INCA1).